A 349-amino-acid chain; its full sequence is Protein RecA (349 aa).

Residue 65–72 (GPESSGKT) participates in ATP binding.

Belongs to the RecA family.

The protein resides in the cytoplasm. Functionally, can catalyze the hydrolysis of ATP in the presence of single-stranded DNA, the ATP-dependent uptake of single-stranded DNA by duplex DNA, and the ATP-dependent hybridization of homologous single-stranded DNAs. It interacts with LexA causing its activation and leading to its autocatalytic cleavage. In Aliarcobacter butzleri (strain RM4018) (Arcobacter butzleri), this protein is Protein RecA.